The following is a 367-amino-acid chain: Anhydro-N-acetylmuramic acid kinase (367 aa).

10–17 (GTSLDGVD) lines the ATP pocket.

It belongs to the anhydro-N-acetylmuramic acid kinase family.

It carries out the reaction 1,6-anhydro-N-acetyl-beta-muramate + ATP + H2O = N-acetyl-D-muramate 6-phosphate + ADP + H(+). The protein operates within amino-sugar metabolism; 1,6-anhydro-N-acetylmuramate degradation. It functions in the pathway cell wall biogenesis; peptidoglycan recycling. Its function is as follows. Catalyzes the specific phosphorylation of 1,6-anhydro-N-acetylmuramic acid (anhMurNAc) with the simultaneous cleavage of the 1,6-anhydro ring, generating MurNAc-6-P. Is required for the utilization of anhMurNAc either imported from the medium or derived from its own cell wall murein, and thus plays a role in cell wall recycling. The sequence is that of Anhydro-N-acetylmuramic acid kinase from Aliivibrio fischeri (strain ATCC 700601 / ES114) (Vibrio fischeri).